We begin with the raw amino-acid sequence, 211 residues long: Regulator of G-protein signaling 2 (211 aa).

A necessary for membrane association region spans residues 32-66; that stretch reads KMKRTLLKDWKTRLSYFLQNSSAPGKPKTGKKSKQ. The interval 79 to 116 is necessary to inhibit protein synthesis; sequence LWAEAFDELLASKYGLAAFRAFLKSEFCEENIEFWLAC. The RGS domain occupies 83–199; the sequence is AFDELLASKY…LESEFYQDLC (117 aa).

As to quaternary structure, interacts with GNAQ. Does not interact with GNAI1 and GNAI3. Interacts with EIF2B5. Interacts with PRKG1 (isoform alpha). Phosphorylated by protein kinase C. Phosphorylation by PRKG1 leads to activation of RGS2 activity. In terms of tissue distribution, expressed in a wide variety of tissues.

The protein localises to the cell membrane. It is found in the cytoplasm. Its subcellular location is the nucleus. It localises to the nucleolus. Regulates G protein-coupled receptor signaling cascades. Inhibits signal transduction by increasing the GTPase activity of G protein alpha subunits, thereby driving them into their inactive GDP-bound form. It is involved in the negative regulation of the angiotensin-activated signaling pathway. Plays a role in the regulation of blood pressure in response to signaling via G protein-coupled receptors and GNAQ. Plays a role in regulating the constriction and relaxation of vascular smooth muscle. Binds EIF2B5 and blocks its activity, thereby inhibiting the translation of mRNA into protein. The protein is Regulator of G-protein signaling 2 (Rgs2) of Mus musculus (Mouse).